The sequence spans 112 residues: Mitochondrial import inner membrane translocase subunit TIM14-1 (112 aa).

Ala2 is subject to N-acetylalanine. The chain crosses the membrane as a helical span at residues 7-23; sequence AGVAVAATALAGRYGIQ. Positions 53 to 112 constitute a J domain; it reads EAALILGVRESVAAEKVKEAHRKVMVANHPDAGGSHFLASKINEAKDVMLGKTKNSGSAF.

The protein belongs to the TIM14 family. Probable component of the PAM complex at least composed of a mitochondrial HSP70 protein, TIMM44 and TIMM14. The complex interacts with the TIMM23 component of the TIM17:23 complex.

It is found in the mitochondrion. The protein resides in the mitochondrion inner membrane. Its function is as follows. Component of the PAM complex, a complex required for the translocation of transit peptide-containing proteins from the inner membrane into the mitochondrial matrix in an ATP-dependent manner. In Arabidopsis thaliana (Mouse-ear cress), this protein is Mitochondrial import inner membrane translocase subunit TIM14-1 (TIM14-1).